The primary structure comprises 56 residues: Small ribosomal subunit protein uS14z/uS14y/uS14x (56 aa).

The Zn(2+) site is built by Cys-21, Cys-24, Cys-39, and Cys-42.

Belongs to the universal ribosomal protein uS14 family. Requires Zn(2+) as cofactor.

The polypeptide is Small ribosomal subunit protein uS14z/uS14y/uS14x (RPS29A) (Arabidopsis thaliana (Mouse-ear cress)).